Here is a 395-residue protein sequence, read N- to C-terminus: Lipid-A-disaccharide synthase (395 aa).

The protein belongs to the LpxB family.

It carries out the reaction a lipid X + a UDP-2-N,3-O-bis[(3R)-3-hydroxyacyl]-alpha-D-glucosamine = a lipid A disaccharide + UDP + H(+). The protein operates within bacterial outer membrane biogenesis; LPS lipid A biosynthesis. In terms of biological role, condensation of UDP-2,3-diacylglucosamine and 2,3-diacylglucosamine-1-phosphate to form lipid A disaccharide, a precursor of lipid A, a phosphorylated glycolipid that anchors the lipopolysaccharide to the outer membrane of the cell. This chain is Lipid-A-disaccharide synthase, found in Bordetella avium (strain 197N).